The sequence spans 713 residues: MLPLWLVLAGLLLAVGPAASHRGEMEPDSLASGDDDEDSDGDGPHGDRSEEPVYMHRAPYWTHPHRMDKKLYAVPAGNTVKFRCPASGSPSPSIRWFKNGREFRGEHRIGGIRLRHQHWSLVMESVVPSDRGNYTCLVENRFGRIRYSYLLDVLERSPHRPILQAGLPANTTALVGSDVEFFCKVYSDAQPHLQWLKHIEVNGSSYGPDGVPYVQVLKTADINSSEVEVLYLRNVTMEDAGEYTCLAGNSIGLSYQSAWLTVLPEEELVHEAETSEAKYTDIIIYTSGSLAVAMALIIVVLCRMQTQSSKQPLEPMAVHKLSKFPLIRQFSLDSSSSGKSSTSLMRVTRLSSSCAPMLAGVVEMDLPLDSKWEFPREKLVLGKPLGEGCFGQVVRAEAYGIDRQWPDRAVTVAVKMLKDNATDKDLADLISEMEMMKLMDKHKNIINLLGVCTQDGPLYVIVEFAAKGNLREYLRARRPPTPDYTFDITELHEEQLCFKDLVSCVYQVARGMEYLESRRCIHRDLAARNVLVTAENVMKIADFGLARDVHDIDYYKKTSNGRLPVKWMAPEALFDRVYTHQSDVWSFGILMWEIFTLGGSPYPGIPVEELFKLLKEGHRMDCPSNCTHELYMLMRECWHAVPLQRPTFKQLVEGLDKILAAISEEYLDLSMPFEQYSPSCEDTTSTCSSDDSVFTHDPMPLAPCLFSCPSGRT.

An N-terminal signal peptide occupies residues 1–20; the sequence is MLPLWLVLAGLLLAVGPAAS. The interval 21 to 54 is disordered; the sequence is HRGEMEPDSLASGDDDEDSDGDGPHGDRSEEPVY. Residues 21-281 lie on the Extracellular side of the membrane; the sequence is HRGEMEPDSL…AETSEAKYTD (261 aa). Basic and acidic residues predominate over residues 42–54; the sequence is DGPHGDRSEEPVY. Ig-like C2-type domains are found at residues 59–152 and 161–261; these read PYWT…YLLD and PILQ…AWLT. Residues Cys-84 and Cys-136 are joined by a disulfide bond. Asn-133, Asn-170, Asn-202, Asn-223, and Asn-234 each carry an N-linked (GlcNAc...) asparagine glycan. Cys-183 and Cys-245 are joined by a disulfide. The helical transmembrane segment at 282–302 threads the bilayer; sequence IIIYTSGSLAVAMALIIVVLC. The Cytoplasmic segment spans residues 303–713; the sequence is RMQTQSSKQP…CLFSCPSGRT (411 aa). A Protein kinase domain is found at 379–667; that stretch reads LVLGKPLGEG…ILAAISEEYL (289 aa). Residues 385–393 and Lys-415 each bind ATP; that span reads LGEGCFGQV. Asp-524 (proton acceptor) is an active-site residue. Tyr-554, Tyr-555, and Tyr-666 each carry phosphotyrosine; by autocatalysis.

Belongs to the protein kinase superfamily. Tyr protein kinase family. Fibroblast growth factor receptor subfamily. Monomer. Homodimer after ligand binding. Interacts with FGF1, FGF2, FGF4, FGF6, FGF8, FGF9, FGF16, FGF17, FGF18, FGF19, FGF21 and FGF23 (in vitro). Binding affinity for FGF family members is enhanced by interactions between FGFs and heparan sulfate proteoglycans. Interacts with KLB; this strongly increases the affinity for FGF19 and FGF23. Affinity for FGF19 is strongly increased by KLB and sulfated glycosaminoglycans. KLB and KL both interact with the core-glycosylated FGFR4 in the endoplasmic reticulum and promote its degradation, so that only FGFR4 with fully mature N-glycans is expressed at the cell surface. Identified in a complex with NCAM1, CDH2, PLCG1, FRS2, SRC, SHC1, GAP43 and CTTN. Interacts with MMP14 and HIP1. Interacts with STAT3. In terms of processing, N-glycosylated. Full maturation of the glycan chains in the Golgi is essential for high affinity interaction with FGF19. Post-translationally, ubiquitinated. Subject to proteasomal degradation when not fully glycosylated. Autophosphorylated. Binding of FGF family members together with heparan sulfate proteoglycan or heparin promotes receptor dimerization and autophosphorylation on tyrosine residues. Autophosphorylation occurs in trans between the two FGFR molecules present in the dimer.

It localises to the cell membrane. The protein resides in the endosome. Its subcellular location is the endoplasmic reticulum. The catalysed reaction is L-tyrosyl-[protein] + ATP = O-phospho-L-tyrosyl-[protein] + ADP + H(+). With respect to regulation, present in an inactive conformation in the absence of bound ligand. Ligand binding leads to dimerization and activation by autophosphorylation on tyrosine residues. Its function is as follows. Tyrosine-protein kinase that acts as a cell-surface receptor for fibroblast growth factors and plays a role in the regulation of cell proliferation, differentiation and migration, and in regulation of lipid metabolism, bile acid biosynthesis, glucose uptake, vitamin D metabolism and phosphate homeostasis. Required for normal down-regulation of the expression of CYP7A1, the rate-limiting enzyme in bile acid synthesis, in response to FGF19. Phosphorylates PLCG1 and FRS2. Ligand binding leads to the activation of several signaling cascades. Activation of PLCG1 leads to the production of the cellular signaling molecules diacylglycerol and inositol 1,4,5-trisphosphate. Phosphorylation of FRS2 triggers recruitment of GRB2, GAB1, PIK3R1 and SOS1, and mediates activation of RAS, MAPK1/ERK2, MAPK3/ERK1 and the MAP kinase signaling pathway, as well as of the AKT1 signaling pathway. Promotes SRC-dependent phosphorylation of the matrix protease MMP14 and its lysosomal degradation. FGFR4 signaling is down-regulated by receptor internalization and degradation; MMP14 promotes internalization and degradation of FGFR4. The protein is Fibroblast growth factor receptor 4 (FGFR4) of Coturnix coturnix (Common quail).